Consider the following 153-residue polypeptide: ORM1-like protein 2 (153 aa).

The Cytoplasmic portion of the chain corresponds to Met1 to Gly21. The next 2 membrane-spanning stretches (helical) occupy residues Ile22–Phe42 and Phe43–Leu63. The Cytoplasmic portion of the chain corresponds to Leu64–Ser105. Residues Pro106–Ile126 form a helical membrane-spanning segment. Residues Asn127–Tyr153 are Extracellular-facing.

Belongs to the ORM family. As to quaternary structure, ceramide-sensitive subunit of the serine palmitoyltransferase (SPT) complex, which is also composed of SPTLC1, SPTLC2/3 and SPTSSA/B.

It localises to the endoplasmic reticulum membrane. Its function is as follows. Plays an essential role in the homeostatic regulation of sphingolipid de novo biosynthesis by modulating the activity of the serine palmitoyltransferase (SPT) in response to ceramide levels. When complexed to SPT, the binding of ceramides to its N-terminus stabilizes a conformation that block SPT substrate entry, hence preventing SPT catalytic activity. Through this mechanism, maintains ceramide levels at sufficient concentrations for the production of complex sphingolipids, but which prevents the accumulation of ceramides to levels that trigger apoptosis. The sequence is that of ORM1-like protein 2 (ORMDL2) from Gallus gallus (Chicken).